The primary structure comprises 215 residues: Large ribosomal subunit protein uL4 (215 aa).

The tract at residues 46-76 (TAKSKNRAEVSGGGRKPWAQKGGGRARAGSI) is disordered. Gly residues predominate over residues 56 to 71 (SGGGRKPWAQKGGGRA).

This sequence belongs to the universal ribosomal protein uL4 family. As to quaternary structure, part of the 50S ribosomal subunit.

Functionally, one of the primary rRNA binding proteins, this protein initially binds near the 5'-end of the 23S rRNA. It is important during the early stages of 50S assembly. It makes multiple contacts with different domains of the 23S rRNA in the assembled 50S subunit and ribosome. Its function is as follows. Forms part of the polypeptide exit tunnel. This chain is Large ribosomal subunit protein uL4, found in Helicobacter pylori (strain HPAG1).